The following is a 701-amino-acid chain: Polyribonucleotide nucleotidyltransferase (701 aa).

2 residues coordinate Mg(2+): Asp487 and Asp493. Positions Pro554–Ile613 constitute a KH domain. The 69-residue stretch at Gly623 to Lys691 folds into the S1 motif domain.

The protein belongs to the polyribonucleotide nucleotidyltransferase family. In terms of assembly, component of the RNA degradosome, which is a multiprotein complex involved in RNA processing and mRNA degradation. Mg(2+) is required as a cofactor.

It is found in the cytoplasm. It carries out the reaction RNA(n+1) + phosphate = RNA(n) + a ribonucleoside 5'-diphosphate. Involved in mRNA degradation. Catalyzes the phosphorolysis of single-stranded polyribonucleotides processively in the 3'- to 5'-direction. The polypeptide is Polyribonucleotide nucleotidyltransferase (Pseudomonas putida (Arthrobacter siderocapsulatus)).